The primary structure comprises 137 residues: uncharacterized protein (137 aa).

It belongs to the ycf72 family.

Its subcellular location is the plastid. The protein resides in the chloroplast. This is an uncharacterized protein from Oryza nivara (Indian wild rice).